Reading from the N-terminus, the 1004-residue chain is Ephrin type-B receptor 2 (1004 aa).

The signal sequence occupies residues 1–19; the sequence is MGPLWFCCLPLALLPLLAA. Over 20–544 the chain is Extracellular; the sequence is VEETLMDSTT…QTSVQEKLPL (525 aa). In terms of domain architecture, Eph LBD spans 21 to 203; the sequence is EETLMDSTTA…FYRKCPRVIQ (183 aa). 2 disulfide bridges follow: Cys-63/Cys-185 and Cys-98/Cys-108. N-linked (GlcNAc...) asparagine glycosylation is found at Asn-266, Asn-337, Asn-429, Asn-478, and Asn-483. Fibronectin type-III domains follow at residues 325–435 and 436–531; these read IPSA…TNQA and APSA…TMTE. Residues 545-565 traverse the membrane as a helical segment; sequence IIGSSAAGLVFLIAVVVIIIV. Residues 566 to 1004 are Cytoplasmic-facing; that stretch reads CNRRRGFERA…QMNQIQSVEV (439 aa). Residues 639–902 form the Protein kinase domain; sequence VKIEQVIGAG…QIVNTLDKMI (264 aa). ATP contacts are provided by residues 645–653 and Lys-671; that span reads IGAGEFGEV. Asp-764 functions as the Proton acceptor in the catalytic mechanism. An SAM domain is found at 931 to 995; it reads TSFNTVDEWL…LNSIQVMRAQ (65 aa). The PDZ-binding motif lies at 1002–1004; the sequence is VEV.

The protein belongs to the protein kinase superfamily. Tyr protein kinase family. Ephrin receptor subfamily. Heterotetramer upon binding of the ligand. The heterotetramer is composed of an ephrin dimer and a receptor dimer. Oligomerization is probably required to induce biological responses. In terms of processing, ligand binding induces cleavage by matrix metalloproteinases (MMPs) such as MMP7/MMP9, producing an EphB2/N-terminal fragment (NTF) and a C-terminal long fragment (EphB2-LF). EphB2-LF is further cleaved by MMPs, producing EphB2/CTF1 which is further cleaved by the PS1/gamma-secretase producing EphB2/CTF2. Wide tissue distribution throughout development and sustained expression in adult brain. The longer form (CEK5+) is specifically expressed in the central nervous system.

The protein resides in the cell membrane. It is found in the cell projection. Its subcellular location is the axon. It localises to the dendrite. The catalysed reaction is L-tyrosyl-[protein] + ATP = O-phospho-L-tyrosyl-[protein] + ADP + H(+). Functionally, receptor tyrosine kinase which binds promiscuously transmembrane ephrin-B family ligands residing on adjacent cells, leading to contact-dependent bidirectional signaling into neighboring cells. The signaling pathway downstream of the receptor is referred to as forward signaling while the signaling pathway downstream of the ephrin ligand is referred to as reverse signaling. Functions in axon guidance during development. In addition to axon guidance, also regulates dendritic spines development and maturation and stimulates the formation of excitatory synapses. The protein is Ephrin type-B receptor 2 (EPHB2) of Gallus gallus (Chicken).